The sequence spans 205 residues: DNA-directed RNA polymerase subunit 5 (205 aa).

This sequence belongs to the archaeal Rpo5/eukaryotic RPB5 RNA polymerase subunit family.

Its subcellular location is the virion. The enzyme catalyses RNA(n) + a ribonucleoside 5'-triphosphate = RNA(n+1) + diphosphate. Its function is as follows. DNA-dependent RNA polymerase catalyzes the transcription of DNA into RNA using the four ribonucleoside triphosphates as substrates. In Acanthamoeba polyphaga (Amoeba), this protein is DNA-directed RNA polymerase subunit 5.